A 1276-amino-acid polypeptide reads, in one-letter code: Sterol regulatory element-binding protein cleavage-activating protein (1276 aa).

Residues 1–18 lie on the Cytoplasmic side of the membrane; it reads MTLTERLREKISQAFYNH. A helical membrane pass occupies residues 19–39; sequence GLLCASYPIPIILFTGLCILA. The Lumenal segment spans residues 40-279; it reads CCYPLLKLPL…NLVHVHFKEE (240 aa). The tract at residues 46 to 284 is loop-1; the sequence is KLPLPGTGPV…HFKEEIGIAE (239 aa). The disordered stretch occupies residues 60–81; the sequence is PVKGYSPPPADSDHKQGEPSEQ. Asn263 is a glycosylation site (N-linked (GlcNAc...) asparagine). The helical transmembrane segment at 280–300 threads the bilayer; the sequence is IGIAELIPLVTTYIILFAYIY. The SSD domain maps to 284–442; that stretch reads ELIPLVTTYI…MLFFTTVLSI (159 aa). The Cytoplasmic portion of the chain corresponds to 301–312; the sequence is FSTRKIDMVKSK. A helical membrane pass occupies residues 313 to 333; the sequence is WGLALAAVVTVLSSLLMSVGL. Residues 334–344 are Lumenal-facing; sequence CTLFGLTPTLN. The helical transmembrane segment at 345–365 threads the bilayer; the sequence is GGEIFPYLVVVIGLENVLVLT. Topologically, residues 366 to 401 are cytoplasmic; it reads KSVVSTPVDLEVKLRIAQGLSSESWSIMKNVATELG. The helical transmembrane segment at 402–422 threads the bilayer; that stretch reads IILIGYFTLVPAIQEFCLFAV. Residue Val423 is a topological domain, lumenal. Residues 424-444 traverse the membrane as a helical segment; that stretch reads GLVSDFFLQMLFFTTVLSIDI. Topologically, residues 445–518 are cytoplasmic; it reads RRMELADLNK…FLARTRLAQR (74 aa). The short motif at 447 to 452 is the ER export signal element; that stretch reads MELADL. Glycyl lysine isopeptide (Lys-Gly) (interchain with G-Cter in ubiquitin) cross-links involve residues Lys454 and Lys466. Residues 519–539 form a helical membrane-spanning segment; it reads LIMAGTVVWIGILVYTDPAGL. Residues 535-710 are loop-7; it reads DPAGLRTYLA…QTHGDITLYK (176 aa). Topologically, residues 540–707 are lumenal; the sequence is RTYLAAQVTE…GGTQTHGDIT (168 aa). N-linked (GlcNAc...) asparagine glycans are attached at residues Asn590 and Asn641. A helical transmembrane segment spans residues 708 to 728; that stretch reads LYKVAALGLAAGIVLVLLLLC. The Cytoplasmic portion of the chain corresponds to 729 to 1276; it reads LYRVLCPRNY…YVPSVLEKLD (548 aa). Positions 731 to 1276 are interaction with SREBF2; it reads RVLCPRNYGQ…YVPSVLEKLD (546 aa). The stretch at 771–811 is one WD 1 repeat; it reads VLRGHLMDIECLASDGMLLVSCCLAGQVCVWDAQTGDCLTR. Residues Ser821, Ser837, Ser843, Ser850, Ser905, and Ser934 each carry the phosphoserine modification. Residues 834 to 903 are disordered; sequence ERLSDGGKAS…RHRAGCGRSR (70 aa). A disordered region spans residues 928 to 958; that stretch reads SALRPPSPGPPLPQASQEEGTAPEKGSPPLA. WD repeat units lie at residues 949-999 and 1002-1039; these read APEK…LCCS and EISSGITALVFLDRRIVAARLNGSLDFFSLETHTSLSP. Omega-N-methylarginine is present on Arg1048. 4 WD repeats span residues 1074–1111, 1114–1152, 1155–1192, and 1194–1232; these read AHQKPITALRAAAGRLVTGSQDHTLRVFRLEDSCCLFT, GHSGAITTVYIDQTMVLASGGQDGAICLWDVLTGSRVSH, AHRGDVTSLTCTTSCVISSGLDDFINIWDRSTGIKLYS, and QQDLGCGASLGVISDNLLVTGGQGCVSFWDLNYGDLLQT.

This sequence belongs to the WD repeat SCAP family. In terms of assembly, membrane region forms a homotetramer. Component of the SCAP-SREBP complex (composed of SCAP and SREBF1/SREBP1 or SREBF2/SREBP2); interacts with SREBF1/SREBP1 or SREBF2/SREBP2 through its C-terminal cytoplasmic domain. Forms a ternary complex with INSIG1 or INSIG2 through its transmembrane domains at high sterol concentrations. Interacts with PAQR3; the interaction anchors the SCAP-SREBP complex to the Golgi apparatus in low cholesterol conditions. Interacts with the SEC23-SEC24 complex in a SAR1-GTP-dependent manner through an ER export signal in its third cytoplasmic loop. Interacts with RNF139; the interaction inhibits the interaction of SCAP with SEC24B and hampering the ER to Golgi transport of the SCAP-SREBP complex. Interacts with SPRING1. Ubiquitinated at Lys-454 and Lys-466. RNF145 triggers ubiquitination of SCAP, likely inhibiting SCAP-SREBP complex transport to the Golgi apparatus and the subsequent processing/maturation of SREBF2/SREBP2.

It is found in the endoplasmic reticulum membrane. The protein resides in the golgi apparatus membrane. The protein localises to the cytoplasmic vesicle. It localises to the COPII-coated vesicle membrane. Escort protein required for cholesterol as well as lipid homeostasis. Regulates export of the SCAP-SREBP complex from the endoplasmic reticulum to the Golgi upon low cholesterol, thereby regulating the processing of sterol regulatory element-binding proteins (SREBPs) SREBF1/SREBP1 and SREBF2/SREBP2. At high sterol concentrations, formation of a ternary complex with INSIG (INSIG1 or INSIG2) leads to mask the ER export signal in SCAP, promoting retention of the complex in the endoplasmic reticulum. Low sterol concentrations trigger release of INSIG, a conformational change in the SSD domain of SCAP, unmasking of the ER export signal, promoting recruitment into COPII-coated vesicles and transport of the SCAP-SREBP to the Golgi: in the Golgi, SREBPs are then processed, releasing the transcription factor fragment of SREBPs from the membrane, its import into the nucleus and up-regulation of LDLR, INSIG1 and the mevalonate pathway. Binds cholesterol via its SSD domain. The protein is Sterol regulatory element-binding protein cleavage-activating protein of Rattus norvegicus (Rat).